The primary structure comprises 411 residues: Corticotropin-releasing factor receptor 2 (411 aa).

A signal peptide (not cleaved) is located at residues 1–19; sequence MDAALLHSLLEANCSLALA. Residues 1 to 108 lie on the Extracellular side of the membrane; that stretch reads MDAALLHSLL…EPILDDKQRK (108 aa). Asn-13, Asn-41, Asn-74, Asn-86, and Asn-94 each carry an N-linked (GlcNAc...) asparagine glycan. Disulfide bonds link Cys-14–Cys-50, Cys-40–Cys-83, Trp-51–Arg-77, and Cys-64–Cys-98. The helical transmembrane segment at 109–139 threads the bilayer; sequence YDLHYRIALVVNYLGHCVSVAALVAAFLLFL. Residues 140-146 lie on the Cytoplasmic side of the membrane; it reads ALRSIRC. A helical membrane pass occupies residues 147 to 171; sequence LRNVIHWNLITTFILRNVMWFLLQL. At 172 to 185 the chain is on the extracellular side; the sequence is VDHEVHESNEVWCR. Cys-184 and Cys-254 are disulfide-bonded. Residues 186-214 traverse the membrane as a helical segment; that stretch reads CITTIFNYFVVTNFFWMFVEGCYLHTAIV. Residues 215 to 221 lie on the Cytoplasmic side of the membrane; it reads MTYSTER. The chain crosses the membrane as a helical span at residues 222–249; sequence LRKCLFLFIGWCIPFPIIVAWAIGKLYY. The Extracellular portion of the chain corresponds to 250 to 265; it reads ENEQCWFGKEPGDLVD. A helical membrane pass occupies residues 266 to 291; it reads YIYQGPIILVLLINFVFLFNIVRILM. The Cytoplasmic portion of the chain corresponds to 292-302; it reads TKLRASTTSET. The helical transmembrane segment at 303–327 threads the bilayer; that stretch reads IQYRKAVKATLVLLPLLGITYMLFF. Over 328–334 the chain is Extracellular; the sequence is VNPGEDD. The chain crosses the membrane as a helical span at residues 335 to 364; the sequence is LSQIMFIYFNSFLQSFQGFFVSVFYCFFNG. The Cytoplasmic portion of the chain corresponds to 365–411; it reads EVRSAVRKRWHRWQDHHSLRVPMARAMSIPTSPTRISFHSIKQTAAV.

This sequence belongs to the G-protein coupled receptor 2 family. As to quaternary structure, monomer. Interacts (via N-terminal extracellular domain) with CRF, UCN, UCN2 and UCN3. Has highest affinity for UCN, and considerably lower affinity for CRF, UNC2 and UCN3. In terms of processing, a N-glycosylation site within the signal peptide impedes its proper cleavage and function.

It localises to the cell membrane. Its function is as follows. G-protein coupled receptor for CRH (corticotropin-releasing factor), UCN (urocortin), UCN2 and UCN3. Has high affinity for UCN. Ligand binding causes a conformation change that triggers signaling via guanine nucleotide-binding proteins (G proteins) and down-stream effectors, such as adenylate cyclase. Promotes the activation of adenylate cyclase, leading to increased intracellular cAMP levels. In Homo sapiens (Human), this protein is Corticotropin-releasing factor receptor 2 (CRHR2).